Reading from the N-terminus, the 171-residue chain is uncharacterized protein (171 aa).

Positions 139 to 171 (ARKPTKSDDEEEEVGKMGGISSSINSWVQRQKL) are disordered. The segment covering 158-171 (ISSSINSWVQRQKL) has biased composition (polar residues).

This is an uncharacterized protein from Caenorhabditis elegans.